The following is a 119-amino-acid chain: Transcription and mRNA export factor SUS1 (119 aa).

Belongs to the ENY2 family. As to quaternary structure, component of the nuclear pore complex (NPC)-associated TREX-2 complex (transcription and export complex 2), composed of at least SUS1, SAC3, THP1, SEM1, and CDC31. TREX-2 contains 2 SUS1 chains. The TREX-2 complex interacts with the nucleoporin NUP1. Component of the 1.8 MDa SAGA transcription coactivator-HAT complex. SAGA is built of 5 distinct domains with specialized functions. Within the SAGA complex, SUS1, SGF11, SGF73 and UBP8 form an additional subcomplex of SAGA called the DUB module (deubiquitination module). Interacts directly with THP1, SAC3, SGF11, and with the RNA polymerase II.

The protein localises to the nucleus. It localises to the nucleoplasm. The protein resides in the cytoplasm. It is found in the P-body. Involved in mRNA export coupled transcription activation by association with both the TREX-2 and the SAGA complexes. At the promoters, SAGA is required for recruitment of the basal transcription machinery. It influences RNA polymerase II transcriptional activity through different activities such as TBP interaction and promoter selectivity, interaction with transcription activators, and chromatin modification through histone acetylation and deubiquitination. Within the SAGA complex, participates in a subcomplex required for deubiquitination of H2B and for the maintenance of steady-state H3 methylation levels. The TREX-2 complex functions in docking export-competent ribonucleoprotein particles (mRNPs) to the nuclear entrance of the nuclear pore complex (nuclear basket). TREX-2 participates in mRNA export and accurate chromatin positioning in the nucleus by tethering genes to the nuclear periphery. May also be involved in cytoplasmic mRNA decay by interaction with components of P-bodies. The sequence is that of Transcription and mRNA export factor SUS1 from Candida albicans (strain SC5314 / ATCC MYA-2876) (Yeast).